The chain runs to 157 residues: S-ribosylhomocysteine lyase (157 aa).

Residues histidine 54, histidine 58, and cysteine 126 each coordinate Fe cation.

Belongs to the LuxS family. As to quaternary structure, homodimer. The cofactor is Fe cation.

It catalyses the reaction S-(5-deoxy-D-ribos-5-yl)-L-homocysteine = (S)-4,5-dihydroxypentane-2,3-dione + L-homocysteine. In terms of biological role, involved in the synthesis of autoinducer 2 (AI-2) which is secreted by bacteria and is used to communicate both the cell density and the metabolic potential of the environment. The regulation of gene expression in response to changes in cell density is called quorum sensing. Catalyzes the transformation of S-ribosylhomocysteine (RHC) to homocysteine (HC) and 4,5-dihydroxy-2,3-pentadione (DPD). This is S-ribosylhomocysteine lyase from Bacillus pumilus (strain SAFR-032).